Reading from the N-terminus, the 383-residue chain is Transposase InsI for insertion sequence element IS30A (383 aa).

One can recognise an Integrase catalytic domain in the interval 213–379 (VNGTPIHERS…TPKEIIERGV (167 aa)).

The protein belongs to the transposase IS30 family.

Functionally, required for the transposition of the insertion element. This Escherichia coli (strain K12) protein is Transposase InsI for insertion sequence element IS30A (insI1).